Reading from the N-terminus, the 315-residue chain is Putative HTH-type transcriptional regulatory protein PH1808 (315 aa).

Residues 131 to 189 (LKALREEHGYSITELAGILGISRKSLQRYEKGESVVSLEVALRLEEVFDEPLVKPIDVL) enclose the HTH cro/C1-type domain. The H-T-H motif DNA-binding region spans 142-161 (ITELAGILGISRKSLQRYEK).

The polypeptide is Putative HTH-type transcriptional regulatory protein PH1808 (Pyrococcus horikoshii (strain ATCC 700860 / DSM 12428 / JCM 9974 / NBRC 100139 / OT-3)).